A 96-amino-acid chain; its full sequence is MTDRLDDPALDRQLADHPDWTITSARTALTRSFGFKDFSEAFGFMARVALEAQAQDHHPDWSNSYNRVDITLSTHDSGGLSAKDFALAKAIDRIVG.

It belongs to the pterin-4-alpha-carbinolamine dehydratase family.

The enzyme catalyses (4aS,6R)-4a-hydroxy-L-erythro-5,6,7,8-tetrahydrobiopterin = (6R)-L-erythro-6,7-dihydrobiopterin + H2O. This is Putative pterin-4-alpha-carbinolamine dehydratase from Rhodospirillum rubrum (strain ATCC 11170 / ATH 1.1.1 / DSM 467 / LMG 4362 / NCIMB 8255 / S1).